Consider the following 567-residue polypeptide: Zinc finger protein 512 (567 aa).

The tract at residues 1-32 (MSSRLGAVPATSGPTTFKQQRSTRIVGAKNSR) is disordered. Residues 12–23 (SGPTTFKQQRST) are compositionally biased toward polar residues. Glycyl lysine isopeptide (Lys-Gly) (interchain with G-Cter in SUMO2) cross-links involve residues K18 and K84. Residues 86–148 (AATSHVEGSG…QARRIRKEPP (63 aa)) are disordered. Positions 119–130 (KKHKLYGRKQRP) are enriched in basic residues. The C2H2-type 1 zinc finger occupies 197 to 220 (FTCHHCGKQLRSLAGMKYHVMANH). K227 participates in a covalent cross-link: Glycyl lysine isopeptide (Lys-Gly) (interchain with G-Cter in SUMO2). The segment at 287–310 (LKCHHCGKPYRSKAGLAYHLRSEH) adopts a C2H2-type 2 zinc-finger fold. K333 is covalently cross-linked (Glycyl lysine isopeptide (Lys-Gly) (interchain with G-Cter in SUMO2)). Residues 406-430 (IQCPNQGCEAVYSSVSGLKAHLGSC) form a C2H2-type 3; atypical zinc finger. The C2H2-type 4 zinc finger occupies 440–463 (YKCLLCQKEFVSESGVKYHINSVH). Residues 486–567 (QRQQEEEKRR…PKTNHKRGRK (82 aa)) form a disordered region. The segment covering 495-508 (RQQHRSRRSLRRRQ) has biased composition (basic residues). Residues 523 to 532 (VGKDQRRNNE) show a composition bias toward basic and acidic residues. A compositionally biased stretch (basic residues) spans 556-567 (KPPKTNHKRGRK).

This sequence belongs to the krueppel C2H2-type zinc-finger protein family.

It is found in the nucleus. Its function is as follows. May be involved in transcriptional regulation. The polypeptide is Zinc finger protein 512 (ZNF512) (Homo sapiens (Human)).